The following is a 109-amino-acid chain: uncharacterized protein (109 aa).

The chain crosses the membrane as a helical span at residues 78-98; that stretch reads YTCIMYIGLLCMFVLLYMTVI.

It is found in the membrane. This is an uncharacterized protein from Saccharomyces cerevisiae (strain ATCC 204508 / S288c) (Baker's yeast).